The following is a 716-amino-acid chain: Translation initiation factor IF-2 (716 aa).

Residues 50–137 are disordered; that stretch reads FKKSAKPAGN…KPKKELPEKI (88 aa). Over residues 92-101 the composition is skewed to low complexity; the sequence is NNVQNTQFNN. Positions 102-118 are enriched in basic residues; sequence KNKKKNNNNKKNKRGKN. Residues 125–137 are compositionally biased toward basic and acidic residues; that stretch reads KQFKPKKELPEKI. In terms of domain architecture, tr-type G spans 217–386; the sequence is IRPPVVTIMG…LLVSEVEELK (170 aa). The segment at 226–233 is G1; sequence GHVDHGKT. Residue 226 to 233 participates in GTP binding; the sequence is GHVDHGKT. The interval 251 to 255 is G2; the sequence is GITQH. Residues 272–275 form a G3 region; that stretch reads DTPG. Residues 272 to 276 and 326 to 329 each bind GTP; these read DTPGH and NKID. Residues 326–329 are G4; sequence NKID. The segment at 362–364 is G5; the sequence is SAL.

Belongs to the TRAFAC class translation factor GTPase superfamily. Classic translation factor GTPase family. IF-2 subfamily.

It localises to the cytoplasm. Functionally, one of the essential components for the initiation of protein synthesis. Protects formylmethionyl-tRNA from spontaneous hydrolysis and promotes its binding to the 30S ribosomal subunits. Also involved in the hydrolysis of GTP during the formation of the 70S ribosomal complex. The polypeptide is Translation initiation factor IF-2 (Bacillus licheniformis (strain ATCC 14580 / DSM 13 / JCM 2505 / CCUG 7422 / NBRC 12200 / NCIMB 9375 / NCTC 10341 / NRRL NRS-1264 / Gibson 46)).